We begin with the raw amino-acid sequence, 481 residues long: Ribulose bisphosphate carboxylase large chain (481 aa).

A propeptide spanning residues 1–2 is cleaved from the precursor; the sequence is MS. An N-acetylproline modification is found at Pro-3. Lys-14 is modified (N6,N6,N6-trimethyllysine). Substrate is bound by residues Asn-123 and Thr-173. Lys-175 serves as the catalytic Proton acceptor. Lys-177 provides a ligand contact to substrate. Mg(2+) is bound by residues Lys-201, Asp-203, and Glu-204. Lys-201 is modified (N6-carboxylysine). Residue His-294 is the Proton acceptor of the active site. The substrate site is built by Arg-295, His-327, and Ser-379.

It belongs to the RuBisCO large chain family. Type I subfamily. In terms of assembly, heterohexadecamer of 8 large chains and 8 small chains; disulfide-linked. The disulfide link is formed within the large subunit homodimers. Mg(2+) serves as cofactor. In terms of processing, the disulfide bond which can form in the large chain dimeric partners within the hexadecamer appears to be associated with oxidative stress and protein turnover.

The protein localises to the plastid. The enzyme catalyses 2 (2R)-3-phosphoglycerate + 2 H(+) = D-ribulose 1,5-bisphosphate + CO2 + H2O. The catalysed reaction is D-ribulose 1,5-bisphosphate + O2 = 2-phosphoglycolate + (2R)-3-phosphoglycerate + 2 H(+). Its function is as follows. RuBisCO catalyzes two reactions: the carboxylation of D-ribulose 1,5-bisphosphate, the primary event in carbon dioxide fixation, as well as the oxidative fragmentation of the pentose substrate in the photorespiration process. Both reactions occur simultaneously and in competition at the same active site. This Cuscuta obtusiflora (Peruvian dodder) protein is Ribulose bisphosphate carboxylase large chain.